A 451-amino-acid chain; its full sequence is Trigger factor (451 aa).

A PPIase FKBP-type domain is found at 162 to 243 (GDYAIIDITT…VQQSKERKLP (82 aa)).

The protein belongs to the FKBP-type PPIase family. Tig subfamily.

The protein localises to the cytoplasm. The catalysed reaction is [protein]-peptidylproline (omega=180) = [protein]-peptidylproline (omega=0). In terms of biological role, involved in protein export. Acts as a chaperone by maintaining the newly synthesized protein in an open conformation. Functions as a peptidyl-prolyl cis-trans isomerase. This Corynebacterium aurimucosum (strain ATCC 700975 / DSM 44827 / CIP 107346 / CN-1) (Corynebacterium nigricans) protein is Trigger factor.